A 117-amino-acid chain; its full sequence is Holo-[acyl-carrier-protein] synthase (117 aa).

2 residues coordinate Mg(2+): aspartate 8 and glutamate 59.

This sequence belongs to the P-Pant transferase superfamily. AcpS family. Mg(2+) is required as a cofactor.

Its subcellular location is the cytoplasm. The catalysed reaction is apo-[ACP] + CoA = holo-[ACP] + adenosine 3',5'-bisphosphate + H(+). Its function is as follows. Transfers the 4'-phosphopantetheine moiety from coenzyme A to a Ser of acyl-carrier-protein. This is Holo-[acyl-carrier-protein] synthase from Staphylococcus carnosus (strain TM300).